The sequence spans 442 residues: Transposase InsG for insertion sequence element IS4 (442 aa).

The protein belongs to the transposase 11 family.

Its function is as follows. Involved in the transposition of the insertion sequence IS4. The polypeptide is Transposase InsG for insertion sequence element IS4 (insG) (Escherichia coli (strain K12)).